The following is a 181-amino-acid chain: MKLRKTKFFSQLKHQVLTANQKPFLFYKLTMIGFVGFIILLQVFILRNALNGEMDNTMVANSGFINIYVIRNKGVGFSLLQNQTGLVYFLQGLLSVIALVFLVFMVKYSYIFWITTLAFGSLGNFFDRLTSANDSVLDYFIFQNGSSVFNFADCCITFGFIGLFFCFLIQMFKEFKHSKNQ.

The next 3 membrane-spanning stretches (helical) occupy residues Leu25 to Ile45, Leu86 to Val106, and Lys107 to Asp127. Active-site residues include Asp138 and Asp153. A helical transmembrane segment spans residues Phe149 to Ile169.

The protein belongs to the peptidase A8 family.

It localises to the cell membrane. The enzyme catalyses Release of signal peptides from bacterial membrane prolipoproteins. Hydrolyzes -Xaa-Yaa-Zaa-|-(S,diacylglyceryl)Cys-, in which Xaa is hydrophobic (preferably Leu), and Yaa (Ala or Ser) and Zaa (Gly or Ala) have small, neutral side chains.. Its pathway is protein modification; lipoprotein biosynthesis (signal peptide cleavage). In terms of biological role, this protein specifically catalyzes the removal of signal peptides from prolipoproteins. This chain is Lipoprotein signal peptidase, found in Mycoplasma genitalium (strain ATCC 33530 / DSM 19775 / NCTC 10195 / G37) (Mycoplasmoides genitalium).